We begin with the raw amino-acid sequence, 650 residues long: Probable Xaa-Pro aminopeptidase P (650 aa).

Mn(2+)-binding residues include Asp-447, Asp-458, Glu-556, and Glu-570.

It belongs to the peptidase M24B family. Requires Mn(2+) as cofactor.

The enzyme catalyses Release of any N-terminal amino acid, including proline, that is linked to proline, even from a dipeptide or tripeptide.. Its function is as follows. Catalyzes the removal of a penultimate prolyl residue from the N-termini of peptides. The polypeptide is Probable Xaa-Pro aminopeptidase P (AMPP) (Phaeosphaeria nodorum (strain SN15 / ATCC MYA-4574 / FGSC 10173) (Glume blotch fungus)).